The primary structure comprises 303 residues: BAG family molecular chaperone regulator 3 (303 aa).

The segment covering 1–11 (MMKMNTGTSPS) has biased composition (polar residues). The interval 1-27 (MMKMNTGTSPSVIGGGTSGNEWESRPG) is disordered. In terms of domain architecture, Ubiquitin-like spans 45-119 (FRVRVKYGSV…LVVKEDPISQ (75 aa)). The region spanning 138–216 (SISDISFEVD…KYVEALDLLK (79 aa)) is the BAG domain. The disordered stretch occupies residues 249–268 (VEEEEEEPRNSNASSSSGTP). Polar residues predominate over residues 258-267 (NSNASSSSGT). Serine 263 is modified (phosphoserine).

Binds to the ATPase domain of HSP70/HSC70 chaperones. Interacts with HSP70-1.

Its function is as follows. Co-chaperone that regulates diverse cellular pathways, such as programmed cell death and stress responses. This is BAG family molecular chaperone regulator 3 (BAG3) from Arabidopsis thaliana (Mouse-ear cress).